We begin with the raw amino-acid sequence, 479 residues long: Acyltransferase easC (479 aa).

Histidine 161 acts as the Proton acceptor in catalysis.

Belongs to the plant acyltransferase family. In terms of assembly, monomer.

Its pathway is antibiotic biosynthesis. Functionally, acyltransferase; part of the gene cluster that mediates the biosynthesis of emericellamides, secondary metabolites acting as antibiotics. The biosynthesis of emericellamides initiates from the highly reducing polyketide synthase easB which catalyzes the formation of the linear polyketide chain. EasB produces several polyketides that can be further processed by the downstream enzymes. The polyketides are released from easB as linear polyketide carboxylic acids, which are converted to CoA thioesters by the acyl-CoA ligase easD. The substrates are then loaded onto the acyltransferase easC, which shuttles them to the first thiolation (T) domain of the nonribosomal peptide synthetase easA. EasA then performs condensation of the polyketides with one glycine, two alanine, one valine and one leucine residues. A last step of cyclization leads to the production of emericellamides. The sequence is that of Acyltransferase easC from Emericella nidulans (strain FGSC A4 / ATCC 38163 / CBS 112.46 / NRRL 194 / M139) (Aspergillus nidulans).